The primary structure comprises 167 residues: Bacterial non-heme ferritin (167 aa).

Residues 1–145 (MLSKEVVKLL…GIVDKIKLIG (145 aa)) form the Ferritin-like diiron domain. Positions 17, 50, 53, 94, and 127 each coordinate Fe cation.

Belongs to the ferritin family. Prokaryotic subfamily. In terms of assembly, homooligomer of 24 subunits that assemble into a spherical protein shell (12 +/- 1 nM diameter) that can sequester at least 2000 iron atoms.

The protein resides in the cytoplasm. It catalyses the reaction 4 Fe(2+) + O2 + 6 H2O = 4 iron(III) oxide-hydroxide + 12 H(+). Functionally, iron-storage protein. In Campylobacter jejuni subsp. jejuni serotype O:2 (strain ATCC 700819 / NCTC 11168), this protein is Bacterial non-heme ferritin (ftn).